The sequence spans 196 residues: CMRF35-like molecule 2 (196 aa).

Positions 1 to 17 are cleaved as a signal peptide; it reads MRLCAGLLLLCFQGCLS. Residues 18–122 form the Ig-like V-type domain; that stretch reads LTGPGSVSGY…DSWSRDPSVS (105 aa). Topologically, residues 18 to 171 are extracellular; the sequence is LTGPGSVSGY…QLWSLLSSIQ (154 aa). Cysteine 36 and cysteine 104 are disulfide-bonded. An N-linked (GlcNAc...) asparagine glycan is attached at asparagine 84. The chain crosses the membrane as a helical span at residues 172-192; that stretch reads FQVLVFLKLPLFLSMLCAIFW. The Cytoplasmic portion of the chain corresponds to 193–196; sequence VNRL.

The protein belongs to the CD300 family. In terms of assembly, interacts with TYROBP.

It is found in the cell membrane. Its function is as follows. Probably acts as an activating receptor. This chain is CMRF35-like molecule 2 (Cd300e), found in Mus musculus (Mouse).